Here is a 257-residue protein sequence, read N- to C-terminus: Steroid 5-alpha-reductase DET2 (257 aa).

6 consecutive transmembrane segments (helical) span residues 11–31 (FIVFFILVMAFPTFILCQFFT), 47–67 (ISPPIAWAFMESPTLWLTIIV), 78–97 (LAFLLISPYLFHYTNRTIIY), 110–130 (FPLNIAVTAFIFNLLNAYIQS), 151–171 (IGLVIFGSGMLLNIWADGVLL), and 200–220 (IMEWLGWALMTWSWAGLAFFV).

Belongs to the steroid 5-alpha reductase family. In terms of tissue distribution, mostly expressed in leaves and hypocotyls and, to a lower extent, in stems, cotyledons, roots, seeds and callus.

It is found in the membrane. It catalyses the reaction a 3-oxo-5alpha-steroid + NADP(+) = a 3-oxo-Delta(4)-steroid + NADPH + H(+). It participates in plant hormone biosynthesis; brassinosteroid biosynthesis. With respect to regulation, repressed by steroid (4-MA, VG106, PD91, PD17, Finasteride) and non-steroid (AS601811, AFA27, AFA76, AFA131, AFA192) inhibitors; steroid inhibitors are generally more efficient. Involved in a reduction step in the biosynthesis of the plant steroid, brassinolide (BL). Can use progesterone, testosterone, androstenedione and campestenone as substrate. The polypeptide is Steroid 5-alpha-reductase DET2 (Solanum lycopersicum (Tomato)).